A 41-amino-acid chain; its full sequence is Augerpeptide-s11a (41 aa).

In terms of processing, contains 4 disulfide bonds. Expressed by the venom duct.

The protein resides in the secreted. Its function is as follows. Does not elicit any observable symptomatology in C.elegans. This Terebra subulata (Chocolate spotted auger) protein is Augerpeptide-s11a.